Reading from the N-terminus, the 48-residue chain is uncharacterized protein (48 aa).

The signal sequence occupies residues 1 to 21 (MLENNVFRLMILMGGVIALIA).

This is an uncharacterized protein from Bacillus anthracis.